The sequence spans 92 residues: UPF0250 protein XCC3453 (92 aa).

Belongs to the UPF0250 family.

The sequence is that of UPF0250 protein XCC3453 from Xanthomonas campestris pv. campestris (strain ATCC 33913 / DSM 3586 / NCPPB 528 / LMG 568 / P 25).